The chain runs to 118 residues: MLVTFLGILGLLASQVSSQLVGQLRPTEDPPEEELEYWCAYMESCQFCWDCQDGNCINKIDGSVIYKNEYVRPCSVSRSMDKCMYDLNKGIYHSMSCSDPKAWNPYKYFRKEWKKDEL.

An N-terminal signal peptide occupies residues 1 to 18 (MLVTFLGILGLLASQVSS). The short motif at 115–118 (KDEL) is the Prevents secretion from ER element.

The protein belongs to the asfivirus MGF 110 family. N-glycosylated.

Its subcellular location is the host endoplasmic reticulum lumen. In terms of biological role, plays a role in virus cell tropism, and may be required for efficient virus replication in macrophages. In Ornithodoros (relapsing fever ticks), this protein is Protein MGF 110-6L.